A 493-amino-acid polypeptide reads, in one-letter code: GTPase Der (493 aa).

Residues 3–166 (PVIALVGRPN…EALGIFPKDN (164 aa)) form the EngA-type G 1 domain. GTP contacts are provided by residues 9–16 (GRPNVGKS), 56–60 (DTGGI), and 118–121 (NKVD). A compositionally biased stretch (acidic residues) spans 167 to 184 (VEEEGEGEPASEEVAEGE). The disordered stretch occupies residues 167–195 (VEEEGEGEPASEEVAEGEEPTRIPGPSEK). Positions 198-371 (IKIAIIGRPN…SVQESFRSAV (174 aa)) constitute an EngA-type G 2 domain. Residues 204-211 (GRPNVGKS), 251-255 (DTAGV), and 316-319 (NKWD) contribute to the GTP site. Positions 372–456 (TRWPTSRLTS…PIRIEYKGGE (85 aa)) constitute a KH-like domain. A compositionally biased stretch (basic and acidic residues) spans 454–463 (GGENPYEGKK). A disordered region spans residues 454–493 (GGENPYEGKKNSLTARQVNKKRRLMSHHKKAEKKKKDKRR). Over residues 471–493 (VNKKRRLMSHHKKAEKKKKDKRR) the composition is skewed to basic residues.

It belongs to the TRAFAC class TrmE-Era-EngA-EngB-Septin-like GTPase superfamily. EngA (Der) GTPase family. Associates with the 50S ribosomal subunit.

In terms of biological role, GTPase that plays an essential role in the late steps of ribosome biogenesis. This is GTPase Der from Pseudomonas aeruginosa (strain LESB58).